A 158-amino-acid chain; its full sequence is Ankyrin repeat domain-containing protein 37 (158 aa).

ANK repeat units follow at residues 1–25 (MLLL…SVNA), 30–59 (CKQS…DLNQ), and 63–92 (LGEA…QIDL). The Nuclear localization signal signature appears at 129 to 149 (EHPDRNDCVAVLRQKRSLGSV).

Ubiquitinated by the CRL2(FEM1B) complex, leading to its degradation. In terms of tissue distribution, mainly expressed in testis, small intestine, colon, blood leukocytes and in pancreatic adenocarcinoma cells.

The protein localises to the nucleus. It localises to the cytoplasm. The sequence is that of Ankyrin repeat domain-containing protein 37 from Homo sapiens (Human).